The primary structure comprises 924 residues: Intercellular adhesion molecule 5 (924 aa).

The first 31 residues, 1 to 31 (MPGPSPGLRRALLGLWAALGLGLFGLSAVSQ), serve as a signal peptide directing secretion. Over 32 to 835 (EPFWADLQPR…RITVRVAGPW (804 aa)) the chain is Extracellular. 9 Ig-like C2-type domains span residues 48-130 (GGSL…PLPP), 135-235 (GENF…RLAA), 242-329 (GSER…LLTL), 337-402 (GQMV…SAEL), 408-486 (PRLD…VTLT), 491-568 (PALD…VAVT), 573-662 (PRFE…VVSA), 666-739 (PEMD…RTVT), and 746-830 (PVVA…ITVR). An N-linked (GlcNAc...) (high mannose) asparagine glycan is attached at Asn-54. 2 cysteine pairs are disulfide-bonded: Cys-55/Cys-99 and Cys-59/Cys-103. Residues Asn-74 and Asn-137 are each glycosylated (N-linked (GlcNAc...) asparagine). Residues Cys-142 and Cys-198 are joined by a disulfide bond. A phosphothreonine mark is found at Thr-182 and Thr-184. Residues Asn-195 and Asn-214 are each glycosylated (N-linked (GlcNAc...) asparagine). Cys-249 and Cys-302 form a disulfide bridge. Asn-303, Asn-316, Asn-371, and Asn-397 each carry an N-linked (GlcNAc...) asparagine glycan. The cysteines at positions 344 and 383 are disulfide-linked. 3 disulfides stabilise this stretch: Cys-415/Cys-470, Cys-498/Cys-552, and Cys-580/Cys-645. Asn-583 and Asn-646 each carry an N-linked (GlcNAc...) asparagine glycan. A disulfide bond links Cys-673 and Cys-725. Asn-764, Asn-795, and Asn-796 each carry an N-linked (GlcNAc...) asparagine glycan. An intrachain disulfide couples Cys-769 to Cys-814. The helical transmembrane segment at 836 to 856 (LWVAVGGAAGGAALLAAGAGL) threads the bilayer. Residues 857–924 (AFYVQSTACK…EVFAIQLTSA (68 aa)) lie on the Cytoplasmic side of the membrane. Positions 891–903 (AGGAAGAEGGPEA) are enriched in gly residues. The interval 891 to 911 (AGGAAGAEGGPEAAGGAAESP) is disordered.

It belongs to the immunoglobulin superfamily. ICAM family. Post-translationally, glycosylation at Asn-54 is critical for functional folding. As to expression, expressed on neurons in the most rostral segment of the mammalian brain, the telencephalon.

Its subcellular location is the membrane. Its function is as follows. ICAM proteins are ligands for the leukocyte adhesion protein LFA-1 (integrin alpha-L/beta-2). In Homo sapiens (Human), this protein is Intercellular adhesion molecule 5 (ICAM5).